The chain runs to 60 residues: Cytotoxin 2 (60 aa).

Intrachain disulfides connect Cys3/Cys21, Cys14/Cys38, Cys42/Cys53, and Cys54/Cys59.

The protein belongs to the three-finger toxin family. Short-chain subfamily. Type IA cytotoxin sub-subfamily. Monomer in solution; Homodimer and oligomer in the presence of negatively charged lipids forming a pore with a size ranging between 20 and 30 Angstroms. Expressed by the venom gland.

It is found in the secreted. The protein resides in the target cell membrane. Shows cytolytic activity on many different cells by forming pore in lipid membranes. In vivo, increases heart rate or kills the animal by cardiac arrest. In addition, it binds to heparin with high affinity, interacts with Kv channel-interacting protein 1 (KCNIP1) in a calcium-independent manner, and binds to integrin alpha-V/beta-3 (ITGAV/ITGB3) with moderate affinity. This is Cytotoxin 2 from Naja nivea (Cape cobra).